Consider the following 340-residue polypeptide: Protein-arginine kinase (340 aa).

Residues 21 to 242 form the Phosphagen kinase C-terminal domain; that stretch reads VVLSSRIRLA…EQIIMQERVA (222 aa). ATP contacts are provided by residues 24–28, His-79, Arg-113, 164–168, and 195–200; these read SSRIR, RASVM, and RGIYGE.

It belongs to the ATP:guanido phosphotransferase family.

The catalysed reaction is L-arginyl-[protein] + ATP = N(omega)-phospho-L-arginyl-[protein] + ADP + H(+). In terms of biological role, catalyzes the specific phosphorylation of arginine residues in proteins. The protein is Protein-arginine kinase of Listeria welshimeri serovar 6b (strain ATCC 35897 / DSM 20650 / CCUG 15529 / CIP 8149 / NCTC 11857 / SLCC 5334 / V8).